The following is an 895-amino-acid chain: Zinc finger protein 574 (895 aa).

3 C2H2-type zinc fingers span residues 16 to 38 (YVCS…QNSH), 76 to 98 (YQCL…QELH), and 126 to 148 (YECV…RQTH). The residue at position 164 (Ser-164) is a Phosphoserine. The segment at 214–236 (YKCSECSQLFQLPADFLEHQATH) adopts a C2H2-type 4 zinc-finger fold. A disordered region spans residues 239 to 301 (APVPESQEPA…RARRNNSGEA (63 aa)). Polar residues predominate over residues 247-257 (PALQQEVQASS). Positions 274 to 287 (HSYELRNGEAIGRD) are enriched in basic and acidic residues. Ser-298 bears the Phosphoserine mark. 4 C2H2-type zinc fingers span residues 309-331 (LFCS…LRSH), 336-358 (FKCP…LGDH), 364-386 (FLCV…RRAH), and 392-413 (HSCP…RRTH). Positions 434 to 460 (FPEPAPAETGEPEAPEPPVSEETSAGP) are disordered. C2H2-type zinc fingers lie at residues 466-489 (YRCL…RFVH), 495-517 (HKCS…LRTH), 523-545 (FPCP…RLTH), 551-573 (YRCG…RLVH), 579-601 (YRCQ…RYHH), and 607-630 (YKCR…LVVH). The segment at 636–659 (HRCPSCGAAFPSSLRLREHRCAAA) adopts a C2H2-type 15; degenerate zinc-finger fold. The segment at 667–689 (FECGTCGKKVGSAARLQAHEAAH) adopts a C2H2-type 16 zinc-finger fold. Positions 687-732 (AAHAAAGPGEVLAKEPPAPRAPRATRAPVASPAALGGTATASPAPA) are disordered. Low complexity predominate over residues 707–731 (APRATRAPVASPAALGGTATASPAP). Ser-717 is modified (phosphoserine). Residue Thr-724 is modified to Phosphothreonine. Ser-728 carries the phosphoserine modification. 4 C2H2-type zinc fingers span residues 737-759 (LECS…RRIH), 765-787 (YPCP…RRLH), 793-815 (FACE…RRIH), and 821-843 (YSCP…RKTH). Arg-831 is subject to Asymmetric dimethylarginine.

It belongs to the krueppel C2H2-type zinc-finger protein family.

The protein resides in the nucleus. In terms of biological role, may be involved in transcriptional regulation. In Pongo abelii (Sumatran orangutan), this protein is Zinc finger protein 574 (ZNF574).